Consider the following 163-residue polypeptide: Nucleotide-binding protein all4662 (163 aa).

Belongs to the YajQ family.

Functionally, nucleotide-binding protein. The protein is Nucleotide-binding protein all4662 of Nostoc sp. (strain PCC 7120 / SAG 25.82 / UTEX 2576).